A 99-amino-acid chain; its full sequence is Phosphoribosyl-ATP pyrophosphatase (99 aa).

It belongs to the PRA-PH family.

The protein localises to the cytoplasm. The catalysed reaction is 1-(5-phospho-beta-D-ribosyl)-ATP + H2O = 1-(5-phospho-beta-D-ribosyl)-5'-AMP + diphosphate + H(+). Its pathway is amino-acid biosynthesis; L-histidine biosynthesis; L-histidine from 5-phospho-alpha-D-ribose 1-diphosphate: step 2/9. The protein is Phosphoribosyl-ATP pyrophosphatase of Methanosphaerula palustris (strain ATCC BAA-1556 / DSM 19958 / E1-9c).